A 289-amino-acid chain; its full sequence is MKFKKVVLGMCLIASVLVFPVTIKANACCDEYLQTPAAPHDIDSKLPHKLSWSADNPTNTDVNTHYWLFKQAEKILAKDVNHMRANLMNELKKFDKQIAQGIYDADHKNPYYDTSTFLSHFYNPDRDNTYLPGFANAKITGAKYFNQSVTDYREGKFDTAFYKLGLAIHYYTDISQPMHANNFTAISYPPGYHCAYENYVDTIKHNYQATEDMVAKRFCSDDVKDWLYENAKRAKADYPKIVNAKTKKSYLVGNSEWKKDTVEPTGARLRDSQQTLAGFLEFWSKKTNE.

The N-terminal stretch at M1–A25 is a signal peptide. A propeptide spanning residues N26–S51 is cleaved from the precursor. Zn(2+)-binding residues include W52, H65, D106, H120, H169, D173, H179, H193, and E197. A Zn-dependent PLC domain is found at W52–E289.

The protein belongs to the bacterial zinc-metallophospholipase C family. In terms of assembly, forms monomers, dimers and higher order oligomers, but only the monomer is enzymatically active. Zn(2+) is required as a cofactor.

The protein resides in the secreted. The enzyme catalyses a 1,2-diacyl-sn-glycero-3-phosphocholine + H2O = phosphocholine + a 1,2-diacyl-sn-glycerol + H(+). It catalyses the reaction 1,2-dihexadecanoyl-sn-glycero-3-phosphocholine + H2O = 1,2-dihexadecanoyl-sn-glycerol + phosphocholine + H(+). The catalysed reaction is 1-hexadecanoyl-2-(9Z-octadecenoyl)-sn-glycero-3-phosphocholine + H2O = 1-hexadecanoyl-2-(9Z-octadecenoyl)-sn-glycerol + phosphocholine + H(+). It carries out the reaction 1,2-di-(9Z-octadecenoyl)-sn-glycero-3-phosphocholine + H2O = 1,2-di-(9Z-octadecenoyl)-sn-glycerol + phosphocholine + H(+). The enzyme catalyses a 1,2-diacyl-sn-glycero-3-phosphoethanolamine + H2O = phosphoethanolamine + a 1,2-diacyl-sn-glycerol + H(+). It catalyses the reaction 1,2-di-(9Z-octadecenoyl)-sn-glycero-3-phosphoethanolamine + H2O = phosphoethanolamine + 1,2-di-(9Z-octadecenoyl)-sn-glycerol + H(+). The catalysed reaction is 1,2-dihexadecanoyl-sn-glycero-3-phosphoethanolamine + H2O = 1,2-dihexadecanoyl-sn-glycerol + phosphoethanolamine + H(+). It carries out the reaction a 1,2-diacyl-sn-glycero-3-phospho-L-serine + H2O = O-phospho-L-serine + a 1,2-diacyl-sn-glycerol + H(+). The enzyme catalyses a 1,2-diacyl-sn-glycero-3-phosphoglycerol + H2O = glycerol 1-phosphate + a 1,2-diacyl-sn-glycerol + H(+). It catalyses the reaction a 1,2-diacyl-sn-glycero-3-phospho-(1D-myo-inositol) + H2O = 1D-myo-inositol 1-phosphate + a 1,2-diacyl-sn-glycerol + H(+). The catalysed reaction is a sphingomyelin + H2O = phosphocholine + an N-acylsphing-4-enine + H(+). It carries out the reaction a 1-O-(1Z-alkenyl)-2-acyl-sn-glycero-3-phosphoethanolamine + H2O = a 1-O-(1Z-alkenyl)-2-acyl-sn-glycerol + phosphoethanolamine + H(+). Enzymatic activity of LmPC-PLC can be specifically inhibited by its propeptide added in trans. The tendency of the enzyme to oligomerize, which appears to largely attenuate the enzymatic activity, may be one of the mechanisms regulating phospholipase activity in the host cell during the different steps of the infection cycle of L.monocytogenes. Enzyme activity is inhibited by EDTA and o-phenanthroline in vitro. Its function is as follows. Major virulence factor whose phospholipase activity facilitates pore formation by the pore-forming toxin listeriolysin O (LLO), leading to vacuolar membrane disruption and vacuolar escape of L.monocytogenes, which enables the bacterium to spread in the host. Acts as a phospholipase C exhibiting broad substrate specificity, with the highest activities towards diacylglycerophospholipids with phosphocholine, phosphoserine, and phosphoethanolamine head groups, but less towards phosphoglycerol or phosphoinositol head groups. Is also able to hydrolyze sphingomyelin and plasmenylethanolamine. This is Phospholipase C from Listeria monocytogenes serovar 1/2a (strain ATCC BAA-679 / EGD-e).